Consider the following 370-residue polypeptide: Putative F-box protein At3g10430 (370 aa).

Residues 1 to 47 enclose the F-box domain; it reads MGSSLPFDLILEILQRTPAESLLRFKSTCKKWYELISNDKRFMYKHL.

The sequence is that of Putative F-box protein At3g10430 from Arabidopsis thaliana (Mouse-ear cress).